Reading from the N-terminus, the 424-residue chain is Gamma-glutamyl phosphate reductase (424 aa).

It belongs to the gamma-glutamyl phosphate reductase family.

It localises to the cytoplasm. It catalyses the reaction L-glutamate 5-semialdehyde + phosphate + NADP(+) = L-glutamyl 5-phosphate + NADPH + H(+). The protein operates within amino-acid biosynthesis; L-proline biosynthesis; L-glutamate 5-semialdehyde from L-glutamate: step 2/2. Catalyzes the NADPH-dependent reduction of L-glutamate 5-phosphate into L-glutamate 5-semialdehyde and phosphate. The product spontaneously undergoes cyclization to form 1-pyrroline-5-carboxylate. This Dehalococcoides mccartyi (strain ATCC BAA-2266 / KCTC 15142 / 195) (Dehalococcoides ethenogenes (strain 195)) protein is Gamma-glutamyl phosphate reductase.